Here is a 208-residue protein sequence, read N- to C-terminus: Outer-membrane lipoprotein LolB (208 aa).

An N-terminal signal peptide occupies residues 1–17 (MIRRLLGVALLTGAITG). A lipid anchor (N-palmitoyl cysteine) is attached at Cys-18. A lipid anchor (S-diacylglycerol cysteine) is attached at Cys-18.

It belongs to the LolB family. In terms of assembly, monomer.

It is found in the cell outer membrane. In terms of biological role, plays a critical role in the incorporation of lipoproteins in the outer membrane after they are released by the LolA protein. The sequence is that of Outer-membrane lipoprotein LolB from Marinobacter nauticus (strain ATCC 700491 / DSM 11845 / VT8) (Marinobacter aquaeolei).